A 269-amino-acid chain; its full sequence is Putative pyruvate, phosphate dikinase regulatory protein (269 aa).

151–158 provides a ligand contact to ADP; it reads GISRTSKT.

This sequence belongs to the pyruvate, phosphate/water dikinase regulatory protein family. PDRP subfamily.

The enzyme catalyses N(tele)-phospho-L-histidyl/L-threonyl-[pyruvate, phosphate dikinase] + ADP = N(tele)-phospho-L-histidyl/O-phospho-L-threonyl-[pyruvate, phosphate dikinase] + AMP + H(+). It catalyses the reaction N(tele)-phospho-L-histidyl/O-phospho-L-threonyl-[pyruvate, phosphate dikinase] + phosphate + H(+) = N(tele)-phospho-L-histidyl/L-threonyl-[pyruvate, phosphate dikinase] + diphosphate. Functionally, bifunctional serine/threonine kinase and phosphorylase involved in the regulation of the pyruvate, phosphate dikinase (PPDK) by catalyzing its phosphorylation/dephosphorylation. This Staphylococcus aureus protein is Putative pyruvate, phosphate dikinase regulatory protein.